The sequence spans 530 residues: Methionine--tRNA ligase (530 aa).

The 'HIGH' region motif lies at 18–28 (YYVNDVPHIGS). Residues Cys-133, Cys-136, Cys-151, and His-154 each coordinate Zn(2+). The 'KMSKS' region motif lies at 307 to 311 (KMGKS). Lys-310 is an ATP binding site.

It belongs to the class-I aminoacyl-tRNA synthetase family. MetG type 2A subfamily. As to quaternary structure, monomer. It depends on Zn(2+) as a cofactor.

It localises to the cytoplasm. The catalysed reaction is tRNA(Met) + L-methionine + ATP = L-methionyl-tRNA(Met) + AMP + diphosphate. In terms of biological role, is required not only for elongation of protein synthesis but also for the initiation of all mRNA translation through initiator tRNA(fMet) aminoacylation. In Nostoc sp. (strain PCC 7120 / SAG 25.82 / UTEX 2576), this protein is Methionine--tRNA ligase.